A 116-amino-acid polypeptide reads, in one-letter code: Mitochondrial zinc maintenance protein 1, mitochondrial (116 aa).

Residues 89-116 (TERGDNESILTAGSGNTTGGGCCGGGGR) form a disordered region. Positions 104 to 116 (NTTGGGCCGGGGR) are enriched in gly residues.

Belongs to the complex I LYR family. MZM1 subfamily. In terms of assembly, interacts with RIP1.

It localises to the mitochondrion matrix. Functionally, assembly factor required for Rieske Fe-S protein RIP1 incorporation into the cytochrome b-c1 (CIII) complex. Functions as a chaperone, binding to this subunit within the mitochondrial matrix and stabilizing it prior to its translocation and insertion into the late CIII dimeric intermediate within the mitochondrial inner membrane. Modulates the mitochondrial matrix zinc pool. In Fusarium vanettenii (strain ATCC MYA-4622 / CBS 123669 / FGSC 9596 / NRRL 45880 / 77-13-4) (Fusarium solani subsp. pisi), this protein is Mitochondrial zinc maintenance protein 1, mitochondrial (MZM1).